Reading from the N-terminus, the 62-residue chain is Large ribosomal subunit protein eL37 (62 aa).

Positions 20, 23, 35, and 38 each coordinate Zn(2+). The segment at C20–C38 adopts a C4-type zinc-finger fold.

Belongs to the eukaryotic ribosomal protein eL37 family. Zn(2+) serves as cofactor.

In terms of biological role, binds to the 23S rRNA. The polypeptide is Large ribosomal subunit protein eL37 (Methanococcus aeolicus (strain ATCC BAA-1280 / DSM 17508 / OCM 812 / Nankai-3)).